The primary structure comprises 155 residues: uncharacterized protein (155 aa).

The helical transmembrane segment at 5 to 25 threads the bilayer; it reads GIIICVGIAFLIFIFLWAYFK.

Its subcellular location is the membrane. This is an uncharacterized protein from Acheta domesticus (House cricket).